The following is a 262-amino-acid chain: UPF0758 protein BTH_I0781 (262 aa).

Residues 1–45 form a disordered region; that stretch reads MQYEIVSAGENVGDEPERERPVAQAAAAPGIPRPAALPAAGAARR. Residues 22 to 43 show a composition bias toward low complexity; sequence VAQAAAAPGIPRPAALPAAGAA. One can recognise an MPN domain in the interval 140-262; that stretch reads LVDSPGAVDD…TFSFAQAGWI (123 aa). 3 residues coordinate Zn(2+): histidine 211, histidine 213, and aspartate 224. A JAMM motif motif is present at residues 211-224; that stretch reads HNHPSGAVRPSAAD.

Belongs to the UPF0758 family.

The polypeptide is UPF0758 protein BTH_I0781 (Burkholderia thailandensis (strain ATCC 700388 / DSM 13276 / CCUG 48851 / CIP 106301 / E264)).